We begin with the raw amino-acid sequence, 146 residues long: Suppressor APC domain-containing protein 1 (146 aa).

The tract at residues 121-146 (HRKGVTQSTGEVVSQAPPGPKGPTLV) is disordered. Pro residues predominate over residues 137-146 (PPGPKGPTLV).

The polypeptide is Suppressor APC domain-containing protein 1 (Sapcd1) (Mus musculus (Mouse)).